The chain runs to 157 residues: MIEALEIVLLLVIQSLQYICRTCIAFLLIPFLGLYAFDLFLYVYRMILYLSQMFNYKRKLGRSKTNNRPHSPRLHKIYSSGDCMDTLIGQVRDLRVFLLSTIHSHSKRFFSTRFQTKSGINSAIDANDVETTSDVSSFTNLHLTRSSEEGYYIAGSI.

The Cytoplasmic portion of the chain corresponds to Met-1–Glu-6. Residues Ile-7–Ile-29 traverse the membrane as a helical segment. Residues Pro-30–Gly-33 are Lumenal-facing. A helical transmembrane segment spans residues Leu-34–Tyr-56. At Lys-57–Ile-157 the chain is on the cytoplasmic side.

The protein localises to the endoplasmic reticulum membrane. Its function is as follows. Is probably involved in a pathway contributing to genomic integrity. This is Increased recombination centers protein 23 (IRC23) from Saccharomyces cerevisiae (strain ATCC 204508 / S288c) (Baker's yeast).